A 108-amino-acid polypeptide reads, in one-letter code: Insulin (108 aa).

The signal sequence occupies residues 1-24; sequence MALWTRLLPLLALLALWAPAPAQA. 3 disulfide bridges follow: cysteine 31–cysteine 94, cysteine 43–cysteine 107, and cysteine 93–cysteine 98. Positions 57–85 are cleaved as a propeptide — c peptide; it reads EAENPQAGAVELGGGLGGLQALALEGPPQ.

The protein belongs to the insulin family. Heterodimer of a B chain and an A chain linked by two disulfide bonds.

The protein resides in the secreted. Its function is as follows. Insulin decreases blood glucose concentration. It increases cell permeability to monosaccharides, amino acids and fatty acids. It accelerates glycolysis, the pentose phosphate cycle, and glycogen synthesis in liver. The sequence is that of Insulin (INS) from Sus scrofa (Pig).